Reading from the N-terminus, the 174-residue chain is Gamma-crystallin D (174 aa).

2 Beta/gamma crystallin 'Greek key' domains span residues 2 to 40 (GKIT…RVDS) and 41 to 83 (GCWM…RLIP). Residues 84–87 (HAGS) are connecting peptide. Beta/gamma crystallin 'Greek key' domains follow at residues 88-128 (HRIR…NVLE) and 129-171 (GCWV…RRVM).

It belongs to the beta/gamma-crystallin family. Detected in the superior olivary complex of the auditory hindbrain.

Crystallins are the dominant structural components of the vertebrate eye lens. The polypeptide is Gamma-crystallin D (Crygd) (Mus musculus (Mouse)).